The following is a 386-amino-acid chain: Dual-specificity RNA methyltransferase RlmN (386 aa).

Catalysis depends on glutamate 94, which acts as the Proton acceptor. Residues 100 to 341 (EENRGTLCIS…VTTIRKTRGD (242 aa)) form the Radical SAM core domain. Cysteine 107 and cysteine 347 form a disulfide bridge. The [4Fe-4S] cluster site is built by cysteine 114, cysteine 118, and cysteine 121. Residues 173–174 (GE), serine 205, 227–229 (SLH), and asparagine 304 contribute to the S-adenosyl-L-methionine site. Cysteine 347 acts as the S-methylcysteine intermediate in catalysis.

It belongs to the radical SAM superfamily. RlmN family. Requires [4Fe-4S] cluster as cofactor.

The protein resides in the cytoplasm. The catalysed reaction is adenosine(2503) in 23S rRNA + 2 reduced [2Fe-2S]-[ferredoxin] + 2 S-adenosyl-L-methionine = 2-methyladenosine(2503) in 23S rRNA + 5'-deoxyadenosine + L-methionine + 2 oxidized [2Fe-2S]-[ferredoxin] + S-adenosyl-L-homocysteine. It catalyses the reaction adenosine(37) in tRNA + 2 reduced [2Fe-2S]-[ferredoxin] + 2 S-adenosyl-L-methionine = 2-methyladenosine(37) in tRNA + 5'-deoxyadenosine + L-methionine + 2 oxidized [2Fe-2S]-[ferredoxin] + S-adenosyl-L-homocysteine. Functionally, specifically methylates position 2 of adenine 2503 in 23S rRNA and position 2 of adenine 37 in tRNAs. m2A2503 modification seems to play a crucial role in the proofreading step occurring at the peptidyl transferase center and thus would serve to optimize ribosomal fidelity. This chain is Dual-specificity RNA methyltransferase RlmN, found in Herminiimonas arsenicoxydans.